The primary structure comprises 1049 residues: Tegument protein pp150 (1049 aa).

Disordered stretches follow at residues 397–549 (EERQ…DPRF) and 659–945 (PFRM…YPAV). Residues 428-439 (ADEDDDDDDDDE) show a composition bias toward acidic residues. A compositionally biased stretch (gly residues) spans 452–462 (SGKGAASGGGV). A compositionally biased stretch (low complexity) spans 463-474 (SSIFSGLLSSGS). Residues 475–490 (QKPTSGPLNIPQQQQR) are compositionally biased toward polar residues. Residues 509 to 525 (VRRDSAWDVRPLTETRG) show a composition bias toward basic and acidic residues. Positions 672–688 (TVSTTPRRPSTPRAAVT) are enriched in low complexity. Residues 710–722 (PVEDSEEEDDDSS) show a composition bias toward acidic residues. The span at 731 to 743 (GHTTPSSDYNNDV) shows a compositional bias: polar residues. Over residues 745 to 757 (SPPSQTPEQSTPS) the composition is skewed to low complexity. 3 stretches are compositionally biased toward polar residues: residues 766–776 (SPMTTTSTSQK), 791–800 (RAQTVTSTPV), and 808–835 (VSGT…SRNV). Composition is skewed to low complexity over residues 836 to 855 (TSGA…ASAS), 866 to 884 (SPAT…SPAK), 912 to 928 (VVGR…APGR), and 936 to 945 (ASTTPTYPAV). Ser-922 carries an O-linked (GlcNAc) serine; by host glycan. Ser-953 is a glycosylation site (O-linked (GlcNAc) serine; by host). Positions 1006-1032 (DLSSPQKSGTGPQPGSAGMGGAKTPSD) are disordered. Residues 1008–1018 (SSPQKSGTGPQ) are compositionally biased toward polar residues.

The protein belongs to the herpesviridae large structural phosphoprotein family. In terms of assembly, interacts with host BICD1 and RAB6A. Interacts with small capsid protein UL48A; this interaction links together the capsid and pp150. Interacts with host CCNA2. Phosphorylated by host CCNA2.

The protein resides in the virion tegument. The protein localises to the host cytoplasm. It localises to the host nucleus. In terms of biological role, participates in the last steps of viral maturation and release. Associates with nuclear capsids prior to DNA encapsidation and later preserves the integrity of nucleocapsids through secondary envelopment at the assembly compartment. Interacts with host CCNA2 and thereby blocks the onset of lytic gene expression to promote establishment of a quiescent state of infection in undifferentiated cells. This chain is Tegument protein pp150 (UL32), found in Homo sapiens (Human).